The sequence spans 239 residues: Adenylate dimethylallyltransferase (239 aa).

The protein belongs to the isopentenyl transferase family.

It catalyses the reaction dimethylallyl diphosphate + AMP = N(6)-(dimethylallyl)adenosine 5'-phosphate + diphosphate. Transfers dimethylallyl groups to AMP as part of the biosynthesis of cytokinin phytohormones. This chain is Adenylate dimethylallyltransferase (ipt), found in Rhizobium radiobacter (Agrobacterium tumefaciens).